The primary structure comprises 333 residues: Probable pyridoxal reductase 2 (333 aa).

Y52 acts as the Proton donor in catalysis.

It belongs to the aldo/keto reductase family.

Its subcellular location is the cytoplasm. The catalysed reaction is pyridoxine + NADP(+) = pyridoxal + NADPH + H(+). In terms of biological role, catalyzes the reduction of pyridoxal (PL) with NADPH and oxidation of pyridoxine (PN) with NADP(+). The protein is Probable pyridoxal reductase 2 of Schizosaccharomyces pombe (strain 972 / ATCC 24843) (Fission yeast).